The sequence spans 267 residues: tRNA pseudouridine synthase A (267 aa).

The active-site Nucleophile is Asp-51. Substrate is bound at residue Tyr-109.

It belongs to the tRNA pseudouridine synthase TruA family. As to quaternary structure, homodimer.

The catalysed reaction is uridine(38/39/40) in tRNA = pseudouridine(38/39/40) in tRNA. In terms of biological role, formation of pseudouridine at positions 38, 39 and 40 in the anticodon stem and loop of transfer RNAs. This Staphylococcus epidermidis (strain ATCC 12228 / FDA PCI 1200) protein is tRNA pseudouridine synthase A.